We begin with the raw amino-acid sequence, 140 residues long: Nucleoside diphosphate kinase (140 aa).

Residues Lys-11, Phe-59, Arg-87, Thr-93, Arg-104, and Asn-114 each contribute to the ATP site. The active-site Pros-phosphohistidine intermediate is the His-117.

It belongs to the NDK family. Homotetramer. The cofactor is Mg(2+).

The protein localises to the cytoplasm. The catalysed reaction is a 2'-deoxyribonucleoside 5'-diphosphate + ATP = a 2'-deoxyribonucleoside 5'-triphosphate + ADP. It carries out the reaction a ribonucleoside 5'-diphosphate + ATP = a ribonucleoside 5'-triphosphate + ADP. Major role in the synthesis of nucleoside triphosphates other than ATP. The ATP gamma phosphate is transferred to the NDP beta phosphate via a ping-pong mechanism, using a phosphorylated active-site intermediate. This chain is Nucleoside diphosphate kinase, found in Gluconobacter oxydans (strain 621H) (Gluconobacter suboxydans).